The following is a 37-amino-acid chain: Large ribosomal subunit protein bL36c (37 aa).

In terms of assembly, component of the chloroplast large ribosomal subunit (LSU). Mature 70S chloroplast ribosomes of higher plants consist of a small (30S) and a large (50S) subunit. The 30S small subunit contains 1 molecule of ribosomal RNA (16S rRNA) and 24 different proteins. The 50S large subunit contains 3 rRNA molecules (23S, 5S and 4.5S rRNA) and 33 different proteins.

Its subcellular location is the plastid. It is found in the chloroplast. Component of the chloroplast ribosome (chloro-ribosome), a dedicated translation machinery responsible for the synthesis of chloroplast genome-encoded proteins, including proteins of the transcription and translation machinery and components of the photosynthetic apparatus. This is Large ribosomal subunit protein bL36c (rpl36) from Spinacia oleracea (Spinach).